The sequence spans 414 residues: 2,3-diketo-5-methylthiopentyl-1-phosphate enolase (414 aa).

Lys-99 acts as the Proton acceptor in catalysis. Residues Lys-148, 174–177, His-265, Gly-338, and 360–361 contribute to the substrate site; these read KDDE and GG. Mg(2+) is bound by residues Lys-174, Asp-176, and Glu-177. At Lys-174 the chain carries N6-carboxylysine.

The protein belongs to the RuBisCO large chain family. Type IV subfamily. As to quaternary structure, homodimer. It depends on Mg(2+) as a cofactor.

It carries out the reaction 5-methylsulfanyl-2,3-dioxopentyl phosphate = 2-hydroxy-5-methylsulfanyl-3-oxopent-1-enyl phosphate. The protein operates within amino-acid biosynthesis; L-methionine biosynthesis via salvage pathway; L-methionine from S-methyl-5-thio-alpha-D-ribose 1-phosphate: step 3/6. Functionally, catalyzes the enolization of 2,3-diketo-5-methylthiopentyl-1-phosphate (DK-MTP-1-P) into 2-hydroxy-3-keto-5-methylthiopentenyl-1-phosphate (HK-MTPenyl-1-P). This Bacillus thuringiensis (strain Al Hakam) protein is 2,3-diketo-5-methylthiopentyl-1-phosphate enolase.